Here is a 217-residue protein sequence, read N- to C-terminus: Large ribosomal subunit protein uL4c (217 aa).

The segment at 51 to 85 (HRNRNAHTQTRGEVSGGGRKPWKQKGTGRARAGSN) is disordered.

This sequence belongs to the universal ribosomal protein uL4 family. Part of the 50S ribosomal subunit.

The protein localises to the plastid. Its subcellular location is the chloroplast. Probably binds the 23S rRNA. In Gracilaria tenuistipitata var. liui (Red alga), this protein is Large ribosomal subunit protein uL4c (rpl4).